We begin with the raw amino-acid sequence, 602 residues long: Elongation factor 4 (602 aa).

In terms of domain architecture, tr-type G spans 7-189 (RNIRNFSIIA…AIVHRIPPPK (183 aa)). GTP contacts are provided by residues 19-24 (DHGKST) and 136-139 (NKID).

It belongs to the TRAFAC class translation factor GTPase superfamily. Classic translation factor GTPase family. LepA subfamily.

The protein localises to the cell inner membrane. The enzyme catalyses GTP + H2O = GDP + phosphate + H(+). Required for accurate and efficient protein synthesis under certain stress conditions. May act as a fidelity factor of the translation reaction, by catalyzing a one-codon backward translocation of tRNAs on improperly translocated ribosomes. Back-translocation proceeds from a post-translocation (POST) complex to a pre-translocation (PRE) complex, thus giving elongation factor G a second chance to translocate the tRNAs correctly. Binds to ribosomes in a GTP-dependent manner. The chain is Elongation factor 4 from Stenotrophomonas maltophilia (strain R551-3).